The chain runs to 211 residues: LexA repressor (211 aa).

Positions 27–47 form a DNA-binding region, H-T-H motif; sequence QTEIARAFGFKGVRAAQYHLE. Active-site for autocatalytic cleavage activity residues include S131 and K168.

Belongs to the peptidase S24 family. In terms of assembly, homodimer.

It catalyses the reaction Hydrolysis of Ala-|-Gly bond in repressor LexA.. Represses a number of genes involved in the response to DNA damage (SOS response), including recA and lexA. In the presence of single-stranded DNA, RecA interacts with LexA causing an autocatalytic cleavage which disrupts the DNA-binding part of LexA, leading to derepression of the SOS regulon and eventually DNA repair. The sequence is that of LexA repressor from Stenotrophomonas maltophilia (strain R551-3).